The following is a 348-amino-acid chain: Galanin receptor type 1 (348 aa).

Topologically, residues M1–F34 are extracellular. 2 N-linked (GlcNAc...) asparagine glycosylation sites follow: N7 and N12. A helical membrane pass occupies residues I35 to I55. Topologically, residues T56 to T70 are cytoplasmic. A helical membrane pass occupies residues N71–F91. Residues Q92–K109 lie on the Extracellular side of the membrane. A disulfide bond links C108 and C186. A helical transmembrane segment spans residues F110–V131. The Cytoplasmic portion of the chain corresponds to D132–N151. Residues A152–Y172 traverse the membrane as a helical segment. Residues H173–K197 lie on the Extracellular side of the membrane. N182 carries an N-linked (GlcNAc...) asparagine glycan. Residues A198–C218 traverse the membrane as a helical segment. At Y219 to T247 the chain is on the cytoplasmic side. A helical membrane pass occupies residues V248–W268. The Extracellular segment spans residues A269–E270. Residues F271–A291 traverse the membrane as a helical segment. Residues Y292 to V348 lie on the Cytoplasmic side of the membrane. A lipid anchor (S-palmitoyl cysteine) is attached at C319. Positions S328–M337 are enriched in basic and acidic residues. The disordered stretch occupies residues S328 to V348.

Belongs to the G-protein coupled receptor 1 family. As to quaternary structure, interacts with GRP39 AND HTR1A. In terms of processing, three cysteine residues are found in the C-terminus, at least one of which may be palmitoylated. In terms of tissue distribution, expression is detected in brain, spinal cord, heart and skeletal muscle.

It is found in the cell membrane. In terms of biological role, receptor for the hormone galanin. The activity of this receptor is mediated by G proteins that inhibit adenylate cyclase activity. In Mus musculus (Mouse), this protein is Galanin receptor type 1 (Galr1).